A 398-amino-acid polypeptide reads, in one-letter code: MAKEKYDRSKPHVNIGTIGHVDHGKTTLTAAITTVLARRLPTSVNQPKDYASIDAAPEERERGITINTAHVEYETETRHYAHIDAPGHADYVKNMITGAAQMDGAILVVASTDGPMPQTREHILLSRQVGVKHLIVFMNKIDLVDDEELLELVEMEIRDLLSEYDFPGDDLPVIQGSALKALEGDSKYEDIIMELMKTADEYIPEPERDTDKPLLLPVEDVFSITGRGTVASGRIDRGTVRVNDEIEIVGIKEETKKAVVTGVEMFRKQLDEGLAGDNVGILLRGVQRDEIERGQVIAKPGSINPHTKFKGEVYILSKDEGGRHTPFFNNYRPQFYFRTTDVTGSIELPAGTEMVMPGDNVTISVELIHPIAVEQGTTFSIREGGRTVGSGIVSEIEA.

The tr-type G domain occupies 10–207 (KPHVNIGTIG…TADEYIPEPE (198 aa)). The G1 stretch occupies residues 19–26 (GHVDHGKT). A GTP-binding site is contributed by 19–26 (GHVDHGKT). Mg(2+) is bound at residue Thr-26. The interval 63 to 67 (GITIN) is G2. The interval 84–87 (DAPG) is G3. GTP-binding positions include 84 to 88 (DAPGH) and 139 to 142 (NKID). The G4 stretch occupies residues 139-142 (NKID). The segment at 177 to 179 (SAL) is G5.

Belongs to the TRAFAC class translation factor GTPase superfamily. Classic translation factor GTPase family. EF-Tu/EF-1A subfamily. Monomer.

It localises to the cytoplasm. The enzyme catalyses GTP + H2O = GDP + phosphate + H(+). Functionally, GTP hydrolase that promotes the GTP-dependent binding of aminoacyl-tRNA to the A-site of ribosomes during protein biosynthesis. The protein is Elongation factor Tu of Streptococcus uberis (strain ATCC BAA-854 / 0140J).